The primary structure comprises 175 residues: Coagulogen (175 aa).

8 disulfide bridges follow: Cys-8/Cys-167, Cys-10/Cys-95, Cys-60/Cys-161, Cys-65/Cys-121, Cys-75/Cys-168, Cys-88/Cys-140, Cys-127/Cys-170, and Cys-134/Cys-172.

It belongs to the coagulin family. Coagulogen is cleaved after Arg-18 and Arg-46 by a clotting enzyme contained in the hemocyte and activated by a bacterial endotoxin (lipopolysaccharide). This cleavage releases the peptide C and leaves 2 chains of coagulin, A and B, linked by two disulfide bonds. Coagulin molecules interlink to form a gel. In terms of tissue distribution, hemolymph.

Its subcellular location is the secreted. Coagulogen is a gel-forming protein of hemolymph; it hinders the spread of invaders by immobilizing them. This is Coagulogen from Tachypleus gigas (Southeast Asian horseshoe crab).